A 412-amino-acid chain; its full sequence is GATOR complex protein NPRL2 (412 aa).

This sequence belongs to the NPR2 family. In terms of assembly, component of the GATOR complex consisting of mio, Nup44A/Seh1, Im11, Nplr3, Nplr2, Wdr24, Wdr59 and Sec13. Within the GATOR complex, probable component of the GATOR1 subcomplex which is likely composed of Iml1, Nplr2 and Nplr3. Interacts with Nprl3.

The protein localises to the cytoplasm. The protein resides in the lysosome. In terms of biological role, an essential component of the GATOR subcomplex GATOR1 which functions as an inhibitor of the amino acid-sensing branch of the TORC1 signaling pathway. The two GATOR subcomplexes, GATOR1 and GATOR2, regulate the TORC1 pathway in order to mediate metabolic homeostasis, female gametogenesis and the response to amino acid limitation and complete starvation. The function of GATOR1 in negatively regulating the TORC1 pathway is essential for maintaining baseline levels of TORC1 activity under nutrient rich conditions, and for promoting survival during amino acid or complete starvation by inhibiting TORC1-dependent cell growth and promoting catabolic metabolism and autophagy. In addition, this inhibition of TORC1 is necessary to maintain female fertility under normal conditions and during periods of nutrient stress. GATOR1 and GATOR2 act at different stages of oogenesis to regulate TORC1 in order to control meiotic entry and promote oocyte growth and development. After exactly four mitotic cyst divisions, the GATOR1 complex members (Iml1, Nprl2 and Nprl3) down-regulate TORC1 to slow cellular metabolism and promote the mitotic/meiotic transition. At later stages of oogenesis, the mio and Nup44A components of the GATOR2 complex inhibit GATOR1 and thus activate TORC1 to promote meiotic progression, and drive oocyte growth and development. This Drosophila melanogaster (Fruit fly) protein is GATOR complex protein NPRL2.